A 119-amino-acid polypeptide reads, in one-letter code: Putative membrane protein insertion efficiency factor (119 aa).

Positions 82–119 are disordered; sequence NALRGEKGGESAADVPSGGSVSEPPGPAAETSPNAQGA.

The protein belongs to the UPF0161 family.

Its subcellular location is the cell membrane. Its function is as follows. Could be involved in insertion of integral membrane proteins into the membrane. The chain is Putative membrane protein insertion efficiency factor from Streptomyces griseus subsp. griseus (strain JCM 4626 / CBS 651.72 / NBRC 13350 / KCC S-0626 / ISP 5235).